Here is a 98-residue protein sequence, read N- to C-terminus: Large ribosomal subunit protein eL30 (98 aa).

It belongs to the eukaryotic ribosomal protein eL30 family.

This chain is Large ribosomal subunit protein eL30, found in Methanosphaera stadtmanae (strain ATCC 43021 / DSM 3091 / JCM 11832 / MCB-3).